A 249-amino-acid polypeptide reads, in one-letter code: 6-phosphogluconolactonase 3 (249 aa).

The protein belongs to the glucosamine/galactosamine-6-phosphate isomerase family. 6-phosphogluconolactonase subfamily.

It is found in the cytoplasm. It localises to the nucleus. The enzyme catalyses 6-phospho-D-glucono-1,5-lactone + H2O = 6-phospho-D-gluconate + H(+). Its pathway is carbohydrate degradation; pentose phosphate pathway; D-ribulose 5-phosphate from D-glucose 6-phosphate (oxidative stage): step 2/3. In terms of biological role, hydrolysis of 6-phosphogluconolactone to 6-phosphogluconate. This chain is 6-phosphogluconolactonase 3 (SOL3), found in Saccharomyces cerevisiae (strain RM11-1a) (Baker's yeast).